We begin with the raw amino-acid sequence, 426 residues long: Glutamate-1-semialdehyde 2,1-aminomutase (426 aa).

Lysine 265 carries the post-translational modification N6-(pyridoxal phosphate)lysine.

The protein belongs to the class-III pyridoxal-phosphate-dependent aminotransferase family. HemL subfamily. As to quaternary structure, homodimer. Pyridoxal 5'-phosphate serves as cofactor.

It is found in the cytoplasm. It catalyses the reaction (S)-4-amino-5-oxopentanoate = 5-aminolevulinate. It functions in the pathway porphyrin-containing compound metabolism; protoporphyrin-IX biosynthesis; 5-aminolevulinate from L-glutamyl-tRNA(Glu): step 2/2. This Hydrogenovibrio crunogenus (strain DSM 25203 / XCL-2) (Thiomicrospira crunogena) protein is Glutamate-1-semialdehyde 2,1-aminomutase.